The sequence spans 218 residues: Histidine biosynthesis bifunctional protein HisIE (218 aa).

The segment at Met-1–Thr-118 is phosphoribosyl-AMP cyclohydrolase. The tract at residues Leu-119–Gly-218 is phosphoribosyl-ATP pyrophosphohydrolase.

In the N-terminal section; belongs to the PRA-CH family. It in the C-terminal section; belongs to the PRA-PH family.

The protein localises to the cytoplasm. The enzyme catalyses 1-(5-phospho-beta-D-ribosyl)-ATP + H2O = 1-(5-phospho-beta-D-ribosyl)-5'-AMP + diphosphate + H(+). It catalyses the reaction 1-(5-phospho-beta-D-ribosyl)-5'-AMP + H2O = 1-(5-phospho-beta-D-ribosyl)-5-[(5-phospho-beta-D-ribosylamino)methylideneamino]imidazole-4-carboxamide. The protein operates within amino-acid biosynthesis; L-histidine biosynthesis; L-histidine from 5-phospho-alpha-D-ribose 1-diphosphate: step 2/9. It functions in the pathway amino-acid biosynthesis; L-histidine biosynthesis; L-histidine from 5-phospho-alpha-D-ribose 1-diphosphate: step 3/9. This Deinococcus radiodurans (strain ATCC 13939 / DSM 20539 / JCM 16871 / CCUG 27074 / LMG 4051 / NBRC 15346 / NCIMB 9279 / VKM B-1422 / R1) protein is Histidine biosynthesis bifunctional protein HisIE (hisI).